Here is a 266-residue protein sequence, read N- to C-terminus: Glucosamine-6-phosphate deaminase (266 aa).

Asp-72 (proton acceptor; for enolization step) is an active-site residue. Asp-141 acts as the For ring-opening step in catalysis. His-143 (proton acceptor; for ring-opening step) is an active-site residue. Glu-148 functions as the For ring-opening step in the catalytic mechanism.

The protein belongs to the glucosamine/galactosamine-6-phosphate isomerase family. NagB subfamily. In terms of assembly, homohexamer.

It catalyses the reaction alpha-D-glucosamine 6-phosphate + H2O = beta-D-fructose 6-phosphate + NH4(+). The protein operates within amino-sugar metabolism; N-acetylneuraminate degradation; D-fructose 6-phosphate from N-acetylneuraminate: step 5/5. With respect to regulation, allosterically activated by N-acetylglucosamine 6-phosphate (GlcNAc6P). Its function is as follows. Catalyzes the reversible isomerization-deamination of glucosamine 6-phosphate (GlcN6P) to form fructose 6-phosphate (Fru6P) and ammonium ion. In Erwinia tasmaniensis (strain DSM 17950 / CFBP 7177 / CIP 109463 / NCPPB 4357 / Et1/99), this protein is Glucosamine-6-phosphate deaminase.